Reading from the N-terminus, the 207-residue chain is Varv peptide A/Kalata-B1 (207 aa).

The N-terminal stretch at Met-1 to Ala-20 is a signal peptide. The propeptide occupies Thr-21 to Gly-66. Residues Gly-67 to Asn-95 constitute a cross-link (cyclopeptide (Gly-Asn)). Intrachain disulfides connect Cys-71/Cys-85, Cys-75/Cys-87, and Cys-80/Cys-92. Residues Ser-96–Gly-120 constitute a propeptide that is removed on maturation. Residues Gly-121–Asn-149 constitute a cross-link (cyclopeptide (Gly-Asn)). Intrachain disulfides connect Cys-125-Cys-139, Cys-129-Cys-141, and Cys-134-Cys-146. Residues Ala-150–Gly-174 constitute a propeptide that is removed on maturation. Residues Gly-175–Asn-203 constitute a cross-link (cyclopeptide (Gly-Asn)). 3 cysteine pairs are disulfide-bonded: Cys-179-Cys-193, Cys-183-Cys-195, and Cys-188-Cys-200. Positions Ala-204–Met-207 are excised as a propeptide.

Belongs to the cyclotide family. Moebius subfamily. Varv peptide A and kalata-B1 are cyclic peptides.

In terms of biological role, probably participates in a plant defense mechanism. Has hemolytic activity. In Viola odorata (Sweet violet), this protein is Varv peptide A/Kalata-B1.